A 284-amino-acid chain; its full sequence is Bifunctional protein FolD (284 aa).

NADP(+) contacts are provided by residues 166–168 and isoleucine 232; that span reads GAS.

This sequence belongs to the tetrahydrofolate dehydrogenase/cyclohydrolase family. Homodimer.

The catalysed reaction is (6R)-5,10-methylene-5,6,7,8-tetrahydrofolate + NADP(+) = (6R)-5,10-methenyltetrahydrofolate + NADPH. The enzyme catalyses (6R)-5,10-methenyltetrahydrofolate + H2O = (6R)-10-formyltetrahydrofolate + H(+). It participates in one-carbon metabolism; tetrahydrofolate interconversion. In terms of biological role, catalyzes the oxidation of 5,10-methylenetetrahydrofolate to 5,10-methenyltetrahydrofolate and then the hydrolysis of 5,10-methenyltetrahydrofolate to 10-formyltetrahydrofolate. The protein is Bifunctional protein FolD of Pseudoalteromonas translucida (strain TAC 125).